We begin with the raw amino-acid sequence, 622 residues long: Chaperone protein HscA homolog (622 aa).

Belongs to the heat shock protein 70 family.

Its function is as follows. Chaperone involved in the maturation of iron-sulfur cluster-containing proteins. Has a low intrinsic ATPase activity which is markedly stimulated by HscB. This is Chaperone protein HscA homolog from Acidovorax sp. (strain JS42).